Consider the following 1118-residue polypeptide: Cytospin-A (1118 aa).

A disordered region spans residues 1–176 (MKKASRSVGS…SKSKSDNQIS (176 aa)). Over residues 29-52 (ESGSSLSAVTKLSKPGTSASLLKT) the composition is skewed to polar residues. Over residues 79–119 (STCASTVSSTTGTTMSTLENKPRTVAGSTARRSTSSGTKES) the composition is skewed to low complexity. 2 stretches are compositionally biased toward basic and acidic residues: residues 120 to 131 (SSSRERIRDRSR) and 158 to 171 (TNPESDIRMSKSKS). A coiled-coil region spans residues 193-281 (KTKDVEILHL…LNALGFSLEQ (89 aa)). Disordered stretches follow at residues 299 to 324 (ITAGNHSDGGGTLTSSVEGSAPGSME) and 359 to 391 (SSDDALDAPSSSESEGVPSIERSRKGSSGNASE). The segment covering 359 to 373 (SSDDALDAPSSSESE) has biased composition (low complexity). 2 coiled-coil regions span residues 396 to 450 (CLTE…MESL) and 488 to 808 (RYME…RGRV). 2 disordered regions span residues 856–879 (PSPAAATIPRTPLSPSPMKTPPAA) and 921–1002 (TSST…RKDP). Over residues 937–946 (ESAKSISVSR) the composition is skewed to low complexity. Residues 947-957 (RSSEEIKRDIS) are compositionally biased toward basic and acidic residues. The span at 972–991 (TTSPQLSLSSSPTASVTPTT) shows a compositional bias: low complexity. Positions 1012–1117 (GSKRNALLKW…YVTAIYKYFE (106 aa)) constitute a Calponin-homology (CH) domain.

Belongs to the cytospin-A family. May interact with both microtubules and actin cytoskeleton.

The protein resides in the cytoplasm. It is found in the cytoskeleton. Its subcellular location is the spindle. The protein localises to the cell junction. It localises to the gap junction. Functionally, involved in cytokinesis and spindle organization. May play a role in actin cytoskeleton organization and microtubule stabilization and hence required for proper cell adhesion and migration. The chain is Cytospin-A (SPECC1L) from Gallus gallus (Chicken).